The chain runs to 222 residues: Ribonuclease HII (222 aa).

Residues 17 to 206 (DLVAGVDEVG…VRAAHEARAS (190 aa)) enclose the RNase H type-2 domain. A divalent metal cation-binding residues include aspartate 23, glutamate 24, and aspartate 115.

It belongs to the RNase HII family. Mn(2+) serves as cofactor. Mg(2+) is required as a cofactor.

The protein localises to the cytoplasm. The enzyme catalyses Endonucleolytic cleavage to 5'-phosphomonoester.. Functionally, endonuclease that specifically degrades the RNA of RNA-DNA hybrids. The chain is Ribonuclease HII from Pseudomonas savastanoi pv. phaseolicola (strain 1448A / Race 6) (Pseudomonas syringae pv. phaseolicola (strain 1448A / Race 6)).